We begin with the raw amino-acid sequence, 443 residues long: Xaa-Pro dipeptidase (443 aa).

5 residues coordinate Mn(2+): aspartate 246, aspartate 257, histidine 339, glutamate 384, and glutamate 423.

It belongs to the peptidase M24B family. Bacterial-type prolidase subfamily. Requires Mn(2+) as cofactor.

The catalysed reaction is Xaa-L-Pro dipeptide + H2O = an L-alpha-amino acid + L-proline. In terms of biological role, splits dipeptides with a prolyl residue in the C-terminal position. The polypeptide is Xaa-Pro dipeptidase (Pectobacterium atrosepticum (strain SCRI 1043 / ATCC BAA-672) (Erwinia carotovora subsp. atroseptica)).